The following is a 150-amino-acid chain: Protein Turandot X1/X2 (150 aa).

Residues 1-22 form the signal peptide; the sequence is MRLYIGSLLICVLLGIVPFATA. The interval 127-150 is disordered; that stretch reads REEGQSNHANSPTTSPSRIQKMTK. Residues 132–150 show a composition bias toward polar residues; sequence SNHANSPTTSPSRIQKMTK.

It belongs to the Turandot family.

Its subcellular location is the secreted. Functionally, a humoral factor that may play a role in stress tolerance. This is Protein Turandot X1/X2 from Drosophila sechellia (Fruit fly).